The sequence spans 547 residues: Mitogen-activated protein kinase 15 (547 aa).

Positions 1-20 are ubiquitin-conjugating; it reads MCAAEVDRHVSQRYLIKRRL. Residues 14–305 form the Protein kinase domain; that stretch reads YLIKRRLGKG…AEQALQHPYV (292 aa). ATP is bound by residues 20–28 and Lys43; that span reads LGKGAYGIV. The active-site Proton acceptor is Asp138. Thr176 carries the post-translational modification Phosphothreonine. Residues 176 to 178 carry the TXY motif; the sequence is TEY. Position 178 is a phosphotyrosine (Tyr178). The interval 266–286 is necessary to interact with ESRRA, to regulate its subcellular localization and to inhibit its transcriptional activity; the sequence is LDALLPPDTPPEALDLLKRLL. The segment at 301-380 is requires for interaction with GABARAP, MAP1LC3B AND GABARAPL1; sequence QHPYVQRFHC…SQRQSLKPGV (80 aa). The interval 370–503 is disordered; that stretch reads ASQRQSLKPG…EAPEPRPGRR (134 aa). PXXXP motif repeat units follow at residues 378–382 and 385–389; these read PGVLP and LAETP. PXXXP motif; regulates binding with chromatin and interaction with PCNA repeat units lie at residues 393–397 and 401–405; these read RGPKP and HGHDP. Residues 401–414 are compositionally biased toward basic and acidic residues; sequence HGHDPEHVEVRRQS. Omega-N-methylarginine is present on Arg449. Polar residues predominate over residues 454-465; sequence SLTSQAAAQAAN. Positions 481-490 are enriched in low complexity; it reads AVGARRVPSR. The segment covering 491-500 has biased composition (basic and acidic residues); the sequence is LPREAPEPRP.

The protein belongs to the protein kinase superfamily. CMGC Ser/Thr protein kinase family. MAP kinase subfamily. As to quaternary structure, interacts with CSK/c-Src, ABL1, RET and TGFB1I1. Interacts with GABARAP, MAP1LC3B and GABARAPL1; controls, in a kinase-dependent fashion, both basal and starvation-induced autophagy. Interacts with ESRRA; promotes re-localization of ESRRA to the cytoplasm through a XPO1-dependent mechanism then inhibits ESRRA transcriptional activity. Interacts with PCNA; the interaction is chromatin binding- and kinase activity-dependent and prevents MDM2-mediated PCNA destruction by inhibiting the association of PCNA with MDM2. Interacts with DVL2. Interacts with CLIC3; MAPK15 does not phosphorylates CLIC3. Autophosphorylated on Thr-176 and Tyr-178; activates the enzyme. In terms of processing, dephosphorylated by PTPN1. Post-translationally, ubiquitinated. Ubiquitination may allow its tight kinase activity regulation and rapid turnover. May be ubiquitinated by a SCF E3 ligase. Ubiquitously expressed at a weak level. Highest expression is found in testis and to a lower extent in lung.

The protein localises to the cytoplasm. Its subcellular location is the cytoskeleton. It localises to the cilium basal body. The protein resides in the cell junction. It is found in the tight junction. The protein localises to the microtubule organizing center. Its subcellular location is the centrosome. It localises to the centriole. The protein resides in the cytoplasmic vesicle. It is found in the autophagosome. The protein localises to the golgi apparatus. Its subcellular location is the nucleus. It localises to the spindle. It carries out the reaction L-seryl-[protein] + ATP = O-phospho-L-seryl-[protein] + ADP + H(+). The catalysed reaction is L-threonyl-[protein] + ATP = O-phospho-L-threonyl-[protein] + ADP + H(+). With respect to regulation, activated by threonine and tyrosine phosphorylation. Inhibited by dual specificity phosphatases, such as DUSP1. Phosphorylation and activation in response to DNA damaging agents, serum stimulation. Constitutively activated when phosphorylated on Tyr-178. Activity depends on the relative rates of MAPK15 autophosphorylation and dephosphorylation by PTPN1. In terms of biological role, atypical MAPK protein that regulates several process such as autophagy, ciliogenesis, protein trafficking/secretion and genome integrity, in a kinase activity-dependent manner. Controls both, basal and starvation-induced autophagy throught its interaction with GABARAP, MAP1LC3B and GABARAPL1 leading to autophagosome formation, SQSTM1 degradation and reduced MAP1LC3B inhibitory phosphorylation. Regulates primary cilium formation and the localization of ciliary proteins involved in cilium structure, transport, and signaling. Prevents the relocation of the sugar-adding enzymes from the Golgi to the endoplasmic reticulum, thereby restricting the production of sugar-coated proteins. Upon amino-acid starvation, mediates transitional endoplasmic reticulum site disassembly and inhibition of secretion. Binds to chromatin leading to MAPK15 activation and interaction with PCNA, that which protects genomic integrity by inhibiting MDM2-mediated degradation of PCNA. Regulates DA transporter (DAT) activity and protein expression via activation of RhoA. In response to H(2)O(2) treatment phosphorylates ELAVL1, thus preventing it from binding to the PDCD4 3'UTR and rendering the PDCD4 mRNA accessible to miR-21 and leading to its degradation and loss of protein expression. Also functions in a kinase activity-independent manner as a negative regulator of growth. Phosphorylates in vitro FOS and MBP. During oocyte maturation, plays a key role in the microtubule organization and mei- otic cell cycle progression in oocytes, fertilized eggs, and early embryos. Interacts with ESRRA promoting its re-localization from the nucleus to the cytoplasm and then prevents its transcriptional activity. This chain is Mitogen-activated protein kinase 15 (Mapk15), found in Rattus norvegicus (Rat).